Here is a 313-residue protein sequence, read N- to C-terminus: MNWRCDVQNFEPDVKISLTRVGVTNLKKLVRLKRTNKRPIILLSTFEVFVNLPSSQKGIHMSRNPEVIEGIIDEALELESYEMETICEEIVKRLFEKHEYATEAEVFMVSDFMTKEKSPISGKYSQEIHKIMGGAKGIKKDDEIELTKIVGAEVVGITACPCAQNLIKEICIKNLKEKGFSDEDIDKILDSVIFATHNQRGIGRIILEVPTGYDIEIMDIIEIIKKSMSAEIHGILKRADEAYVVEQSHKNPKFVEDCVREMAKRVVEKFKHLPDETKVLIRQINMESIHRHDAFAEKVATLGELRRELLSYE.

This sequence belongs to the GTP cyclohydrolase IV family. Homodimer. It depends on Fe(2+) as a cofactor.

The catalysed reaction is GTP + H2O = 7,8-dihydroneopterin 2',3'-cyclic phosphate + formate + diphosphate + H(+). It participates in cofactor biosynthesis; 5,6,7,8-tetrahydromethanopterin biosynthesis. With respect to regulation, inhibited by GTP concentrations greater than 0.3 mM and by 2-amino-5-formylamino-6-ribofuranosylamino-4(3H)-pyrimidinone 5'-phosphate (fapyGMP). Partial inhibition is observed when 2 mM GMP, dGTP, or 7-methyl-GTP was included along with 2 mM GTP. In terms of biological role, converts GTP to 7,8-dihydro-D-neopterin 2',3'-cyclic phosphate, the first intermediate in the biosynthesis of coenzyme methanopterin. It is also able to utilize a variety of GTP analogs as substrates, including GDP, beta,gamma-methylene-GTP and GTP-[gamma-thio]. This is GTP cyclohydrolase MptA (mptA) from Methanocaldococcus jannaschii (strain ATCC 43067 / DSM 2661 / JAL-1 / JCM 10045 / NBRC 100440) (Methanococcus jannaschii).